A 221-amino-acid polypeptide reads, in one-letter code: Thiamine-phosphate synthase (221 aa).

4-amino-2-methyl-5-(diphosphooxymethyl)pyrimidine-binding positions include 46 to 50 and asparagine 83; that span reads QFREK. Mg(2+)-binding residues include aspartate 84 and aspartate 103. Serine 122 is a 4-amino-2-methyl-5-(diphosphooxymethyl)pyrimidine binding site. Position 149 to 151 (149 to 151) interacts with 2-[(2R,5Z)-2-carboxy-4-methylthiazol-5(2H)-ylidene]ethyl phosphate; it reads TQS. Lysine 152 is a 4-amino-2-methyl-5-(diphosphooxymethyl)pyrimidine binding site. Residues glycine 181 and 201–202 contribute to the 2-[(2R,5Z)-2-carboxy-4-methylthiazol-5(2H)-ylidene]ethyl phosphate site; that span reads IS.

The protein belongs to the thiamine-phosphate synthase family. Mg(2+) serves as cofactor.

It carries out the reaction 2-[(2R,5Z)-2-carboxy-4-methylthiazol-5(2H)-ylidene]ethyl phosphate + 4-amino-2-methyl-5-(diphosphooxymethyl)pyrimidine + 2 H(+) = thiamine phosphate + CO2 + diphosphate. It catalyses the reaction 2-(2-carboxy-4-methylthiazol-5-yl)ethyl phosphate + 4-amino-2-methyl-5-(diphosphooxymethyl)pyrimidine + 2 H(+) = thiamine phosphate + CO2 + diphosphate. The enzyme catalyses 4-methyl-5-(2-phosphooxyethyl)-thiazole + 4-amino-2-methyl-5-(diphosphooxymethyl)pyrimidine + H(+) = thiamine phosphate + diphosphate. The protein operates within cofactor biosynthesis; thiamine diphosphate biosynthesis; thiamine phosphate from 4-amino-2-methyl-5-diphosphomethylpyrimidine and 4-methyl-5-(2-phosphoethyl)-thiazole: step 1/1. Condenses 4-methyl-5-(beta-hydroxyethyl)thiazole monophosphate (THZ-P) and 2-methyl-4-amino-5-hydroxymethyl pyrimidine pyrophosphate (HMP-PP) to form thiamine monophosphate (TMP). The polypeptide is Thiamine-phosphate synthase (Actinobacillus succinogenes (strain ATCC 55618 / DSM 22257 / CCUG 43843 / 130Z)).